A 416-amino-acid polypeptide reads, in one-letter code: Phosphoglycerate kinase (416 aa).

Position 2 is an N-acetylserine (Ser-2). (2R)-3-phosphoglycerate is bound by residues Val-23, Asp-24, Phe-25, Asn-26, Gln-38, Arg-39, Ser-62, His-63, Gly-65, and Arg-66. Lys-82 is covalently cross-linked (Glycyl lysine isopeptide (Lys-Gly) (interchain with G-Cter in ubiquitin)). A Phosphothreonine modification is found at Thr-93. Ser-110 is subject to Phosphoserine. The (2R)-3-phosphoglycerate site is built by Leu-121 and Arg-122. A phosphoserine mark is found at Ser-130 and Ser-154. (2R)-3-phosphoglycerate contacts are provided by His-168 and Arg-169. A Phosphoserine modification is found at Ser-172. Lys-197 is covalently cross-linked (Glycyl lysine isopeptide (Lys-Gly) (interchain with G-Cter in ubiquitin)). A Phosphothreonine modification is found at Thr-203. Gly-212 contributes to the ADP binding site. Gly-212 provides a ligand contact to CDP. AMP is bound by residues Ala-213 and Lys-214. ATP is bound by residues Ala-213 and Lys-214. Position 213 (Ala-213) interacts with Mg(2+). Ala-216 and Asp-217 together coordinate Mg(2+). A CDP-binding site is contributed by Asp-217. An AMP-binding site is contributed by Lys-218. Lys-218 is a binding site for ATP. ADP is bound at residue Gly-236. Residue Gly-236 coordinates CDP. Gly-237 lines the AMP pocket. Gly-237 lines the ATP pocket. Phosphothreonine is present on Thr-241. Glycyl lysine isopeptide (Lys-Gly) (interchain with G-Cter in ubiquitin) cross-links involve residues Lys-258 and Lys-274. At Thr-298 the chain carries Phosphothreonine. A Glycyl lysine isopeptide (Lys-Gly) (interchain with G-Cter in ubiquitin) cross-link involves residue Lys-302. Gly-311 is a binding site for AMP. 2 residues coordinate ATP: Gly-311 and Leu-312. Ser-318 bears the Phosphoserine mark. Thr-331 is subject to Phosphothreonine. Residue Asn-335 participates in ATP binding. The CDP site is built by Gly-336 and Phe-341. An ADP-binding site is contributed by Phe-341. Residue Glu-342 participates in AMP binding. ATP is bound at residue Glu-342. Gly-371 is a binding site for (2R)-3-phosphoglycerate. ATP contacts are provided by Asp-373 and Thr-374. Asp-373 is a Mg(2+) binding site. At Thr-392 the chain carries Phosphothreonine. Residues Gly-394 and Gly-395 each coordinate (2R)-3-phosphoglycerate.

This sequence belongs to the phosphoglycerate kinase family. In terms of assembly, monomer. Requires Mg(2+) as cofactor.

Its subcellular location is the cytoplasm. It is found in the mitochondrion. The catalysed reaction is (2R)-3-phosphoglycerate + ATP = (2R)-3-phospho-glyceroyl phosphate + ADP. It functions in the pathway carbohydrate degradation; glycolysis; pyruvate from D-glyceraldehyde 3-phosphate: step 2/5. Catalyzes one of the two ATP producing reactions in the glycolytic pathway via the reversible conversion of 1,3-diphosphoglycerate to 3-phosphoglycerate. Both L- and D- forms of purine and pyrimidine nucleotides can be used as substrates, but the activity is much lower on pyrimidines. Negatively regulates the biosynthesis of acetyl-CoA from pyruvate in the mitochondrion. This chain is Phosphoglycerate kinase (PGK1), found in Saccharomyces cerevisiae (strain ATCC 204508 / S288c) (Baker's yeast).